We begin with the raw amino-acid sequence, 156 residues long: Transcription antitermination protein NusB (156 aa).

It belongs to the NusB family.

In terms of biological role, involved in transcription antitermination. Required for transcription of ribosomal RNA (rRNA) genes. Binds specifically to the boxA antiterminator sequence of the ribosomal RNA (rrn) operons. The sequence is that of Transcription antitermination protein NusB from Rickettsia felis (strain ATCC VR-1525 / URRWXCal2) (Rickettsia azadi).